Consider the following 237-residue polypeptide: Phosphoribosylaminoimidazole-succinocarboxamide synthase (237 aa).

This sequence belongs to the SAICAR synthetase family.

It catalyses the reaction 5-amino-1-(5-phospho-D-ribosyl)imidazole-4-carboxylate + L-aspartate + ATP = (2S)-2-[5-amino-1-(5-phospho-beta-D-ribosyl)imidazole-4-carboxamido]succinate + ADP + phosphate + 2 H(+). The protein operates within purine metabolism; IMP biosynthesis via de novo pathway; 5-amino-1-(5-phospho-D-ribosyl)imidazole-4-carboxamide from 5-amino-1-(5-phospho-D-ribosyl)imidazole-4-carboxylate: step 1/2. This is Phosphoribosylaminoimidazole-succinocarboxamide synthase from Pectobacterium atrosepticum (strain SCRI 1043 / ATCC BAA-672) (Erwinia carotovora subsp. atroseptica).